The primary structure comprises 256 residues: Small ribosomal subunit protein uS2 (256 aa).

Residues 104–149 adopt a coiled-coil conformation; the sequence is NFKTISQRVHRLEELEALFASPEIEERPKKEQVRLKHELERLQKYL.

This sequence belongs to the universal ribosomal protein uS2 family. As to quaternary structure, part of the 30S ribosomal subunit. Contacts protein S8.

Its function is as follows. Spans the head-body hinge region of the 30S subunit. Is loosely associated with the 30S subunit. This is Small ribosomal subunit protein uS2 (rpsB) from Thermus thermophilus (strain ATCC BAA-163 / DSM 7039 / HB27).